The sequence spans 88 residues: U-scoloptoxin(XY)-Er1a (88 aa).

The signal sequence occupies residues 1-24 (MASQVVLSFALVVVLAVFVGQVDS). Positions 66-88 (RPELSPGAWDDSSEEKDNEASLA) are disordered. A propeptide spanning residues 79–88 (EEKDNEASLA) is cleaved from the precursor.

It belongs to the scoloptoxin-XY family. Contains 3 disulfide bonds. In terms of tissue distribution, expressed by the venom gland.

Its subcellular location is the secreted. This chain is U-scoloptoxin(XY)-Er1a, found in Ethmostigmus rubripes (Giant centipede).